The chain runs to 143 residues: Nucleoside diphosphate kinase (143 aa).

6 residues coordinate ATP: Lys-11, Phe-59, Arg-87, Thr-93, Arg-104, and Asn-114. His-117 serves as the catalytic Pros-phosphohistidine intermediate.

The protein belongs to the NDK family. Homotetramer. It depends on Mg(2+) as a cofactor.

Its subcellular location is the cytoplasm. It catalyses the reaction a 2'-deoxyribonucleoside 5'-diphosphate + ATP = a 2'-deoxyribonucleoside 5'-triphosphate + ADP. The enzyme catalyses a ribonucleoside 5'-diphosphate + ATP = a ribonucleoside 5'-triphosphate + ADP. Major role in the synthesis of nucleoside triphosphates other than ATP. The ATP gamma phosphate is transferred to the NDP beta phosphate via a ping-pong mechanism, using a phosphorylated active-site intermediate. The polypeptide is Nucleoside diphosphate kinase (Shewanella baltica (strain OS223)).